A 384-amino-acid chain; its full sequence is N-acetylneuraminate epimerase (384 aa).

An N-terminal signal peptide occupies residues 1-24 (MNMKTLLTYATLLSVTAFSHVVYA). 7 Kelch repeats span residues 46-90 (KVYV…SVIG), 92-145 (YIYL…YSPD), 147-184 (RQILFFGGYNKAYFDRYLRDISTTDKQVNPEVWQRIVD), 185-230 (DYMG…VIEG), 233-281 (VTLI…VAGA), 303-352 (QAFE…TTSE), and 354-383 (VLIVGGEKSGKEMSHKVYMLAWNGSTVEVI). Residue Glu239 is the Proton acceptor of the active site.

It belongs to the NanM family. Homodimer.

The protein resides in the periplasm. It carries out the reaction N-acetyl-alpha-neuraminate = N-acetyl-beta-neuraminate. In terms of biological role, converts alpha-N-acetylneuranimic acid (Neu5Ac) to the beta-anomer, accelerating the equilibrium between the alpha- and beta-anomers. Probably facilitates sialidase-negative bacteria to compete successfully for limited amounts of extracellular Neu5Ac, which is likely taken up in the beta-anomer. In addition, the rapid removal of sialic acid from solution might be advantageous to the bacterium to damp down host responses. This Vibrio cholerae serotype O1 (strain ATCC 39315 / El Tor Inaba N16961) protein is N-acetylneuraminate epimerase.